The following is a 61-amino-acid chain: Small ribosomal subunit protein uS14 (61 aa).

The Zn(2+) site is built by cysteine 24, cysteine 27, cysteine 40, and cysteine 43.

Belongs to the universal ribosomal protein uS14 family. Zinc-binding uS14 subfamily. As to quaternary structure, part of the 30S ribosomal subunit. Contacts proteins S3 and S10. The cofactor is Zn(2+).

Its function is as follows. Binds 16S rRNA, required for the assembly of 30S particles and may also be responsible for determining the conformation of the 16S rRNA at the A site. This is Small ribosomal subunit protein uS14 from Syntrophus aciditrophicus (strain SB).